Here is a 30-residue protein sequence, read N- to C-terminus: Rothein 3.3 (30 aa).

Residue Leu-30 is modified to Leucine amide.

As to expression, expressed by the skin dorsal glands.

It is found in the secreted. In terms of biological role, lacks antimicrobial activity. Does not inhibit the formation of NO by neuronal nitric oxide. This Litoria rothii (Roth's tree frog) protein is Rothein 3.3.